The sequence spans 49 residues: U6-myrmicitoxin-Mri1a (49 aa).

Residues 1–27 (MNPKALCSFLLATFLLLTVTIMPSVHA) form the signal peptide. A propeptide spanning residues 28-35 (NAEANADA) is cleaved from the precursor.

Contains 1 disulfide bond. Expressed by the venom gland.

It is found in the secreted. The protein is U6-myrmicitoxin-Mri1a of Manica rubida (European giant red ant).